A 201-amino-acid polypeptide reads, in one-letter code: Probable cytokinin riboside 5'-monophosphate phosphoribohydrolase LOG6 (201 aa).

Residues glutamate 89, 107-108 (RK), 124-130 (GYGTLEE), and threonine 136 each bind substrate.

Belongs to the LOG family.

The enzyme catalyses N(6)-(dimethylallyl)adenosine 5'-phosphate + H2O = N(6)-dimethylallyladenine + D-ribose 5-phosphate. It catalyses the reaction 9-ribosyl-trans-zeatin 5'-phosphate + H2O = trans-zeatin + D-ribose 5-phosphate. Cytokinin-activating enzyme working in the direct activation pathway. Phosphoribohydrolase that converts inactive cytokinin nucleotides to the biologically active free-base forms. This chain is Probable cytokinin riboside 5'-monophosphate phosphoribohydrolase LOG6 (LOG6), found in Arabidopsis thaliana (Mouse-ear cress).